A 359-amino-acid polypeptide reads, in one-letter code: Carbamoyl phosphate synthase small chain (359 aa).

The tract at residues 1–169 (MTKRILVLED…TKTSYPAPGV (169 aa)) is CPSase. The L-glutamine site is built by Ser-46, Gly-220, and Gly-222. Residues 172-358 (SVVLVDFGLK…IEMMEVFKQS (187 aa)) form the Glutamine amidotransferase type-1 domain. The Nucleophile role is filled by Cys-247. Met-248, Gln-251, Asn-289, Gly-291, and Tyr-292 together coordinate L-glutamine. Catalysis depends on residues His-331 and Asp-333.

The protein belongs to the CarA family. In terms of assembly, composed of two chains; the small (or glutamine) chain promotes the hydrolysis of glutamine to ammonia, which is used by the large (or ammonia) chain to synthesize carbamoyl phosphate. Tetramer of heterodimers (alpha,beta)4.

It carries out the reaction hydrogencarbonate + L-glutamine + 2 ATP + H2O = carbamoyl phosphate + L-glutamate + 2 ADP + phosphate + 2 H(+). The enzyme catalyses L-glutamine + H2O = L-glutamate + NH4(+). It functions in the pathway amino-acid biosynthesis; L-arginine biosynthesis; carbamoyl phosphate from bicarbonate: step 1/1. The protein operates within pyrimidine metabolism; UMP biosynthesis via de novo pathway; (S)-dihydroorotate from bicarbonate: step 1/3. Functionally, small subunit of the glutamine-dependent carbamoyl phosphate synthetase (CPSase). CPSase catalyzes the formation of carbamoyl phosphate from the ammonia moiety of glutamine, carbonate, and phosphate donated by ATP, constituting the first step of 2 biosynthetic pathways, one leading to arginine and/or urea and the other to pyrimidine nucleotides. The small subunit (glutamine amidotransferase) binds and cleaves glutamine to supply the large subunit with the substrate ammonia. In Streptococcus pneumoniae (strain ATCC BAA-255 / R6), this protein is Carbamoyl phosphate synthase small chain.